The sequence spans 69 residues: Ribosome modulation factor (69 aa).

The protein belongs to the ribosome modulation factor family.

It localises to the cytoplasm. Its function is as follows. During stationary phase, converts 70S ribosomes to an inactive dimeric form (100S ribosomes). The sequence is that of Ribosome modulation factor from Marinomonas mediterranea (strain ATCC 700492 / JCM 21426 / NBRC 103028 / MMB-1).